We begin with the raw amino-acid sequence, 185 residues long: Translation initiation factor IF-3 (185 aa).

This sequence belongs to the IF-3 family. Monomer.

It localises to the cytoplasm. Its function is as follows. IF-3 binds to the 30S ribosomal subunit and shifts the equilibrium between 70S ribosomes and their 50S and 30S subunits in favor of the free subunits, thus enhancing the availability of 30S subunits on which protein synthesis initiation begins. The protein is Translation initiation factor IF-3 of Streptococcus pneumoniae serotype 19F (strain G54).